The chain runs to 711 residues: MPQDDDWFWGRPTPVVVGDGETTSKPKPPVAGKTKKVEEQHPRRPGEPDCSYYVKFGSCKFGISCVYNHPDPRPQHGADDKKPAEQFPRRPGEPDCSYYVKFGSCKFGMNCRFNHPPRMPVPPQQEYFSGNACHCHHIEGKSKVEQVKLNVLGLPLRPGTGLCSYYMNRGICKFGTNCKFDHPDPGSDHEKWVVSSNANQVSSQVNIYSVLDHGESNEHTFTSEEVHQPGIPSFHQRISYTRDQLLQLCQNVEVPKDILKFCQDINVELNGEDKISGFGAEKDHVQTPSYKRFDATDSRDWHSWSAQTNWEQKFWDNFSEAKEPYSLGWKQEKFNKPDQSSFHFDSKDQWLKFIKCTPCKSTLIKAEVPLSIQRGIISGKDEVLKTLKSILNTFSPKMFDLQKGQLIETRISSADILKDVINLIFEKVVAEPAFCSTYAQLCTYLNQNLTPFPPEDCDCEEITFKQALSNKCQEIFESAHTVCSEIGKLIGQDREMEQRDKERVVKLETLGNINFIRALLKKKLITNKIIDHIVQAVMDCCKFRFEPLGKVDLLNIIFEGMLDSDSAGDESNICVNAMIGGNKSSIASNDVEMTRKNVNRQNEEAILQKSYDEVPNNKMDPQKNYADGAISYLIEKEKPTNLESSVRICRGGCSISEIMELVVDAGAVEGSDEHFMATLLFIKPEYREIFLTLDTREGRLGWLKRMYKVKE.

The segment at 1 to 49 (MPQDDDWFWGRPTPVVVGDGETTSKPKPPVAGKTKKVEEQHPRRPGEPD) is disordered. The segment covering 35–47 (KKVEEQHPRRPGE) has biased composition (basic and acidic residues). 3 C3H1-type zinc fingers span residues 44 to 72 (RPGE…HPDP), 90 to 118 (RPGE…HPPR), and 157 to 185 (RPGT…HPDP). The MIF4G domain maps to 384–637 (LKTLKSILNT…GAISYLIEKE (254 aa)).

The sequence is that of Zinc finger CCCH domain-containing protein 43 from Oryza sativa subsp. japonica (Rice).